The primary structure comprises 138 residues: Small ribosomal subunit protein uS12 (138 aa).

Residues 33-55 form a disordered region; sequence KEHTNVSSPQKRGVCTRVGTMTP. Aspartate 102 is subject to 3-methylthioaspartic acid.

Belongs to the universal ribosomal protein uS12 family. Part of the 30S ribosomal subunit. Contacts proteins S8 and S17. May interact with IF1 in the 30S initiation complex.

In terms of biological role, with S4 and S5 plays an important role in translational accuracy. Interacts with and stabilizes bases of the 16S rRNA that are involved in tRNA selection in the A site and with the mRNA backbone. Located at the interface of the 30S and 50S subunits, it traverses the body of the 30S subunit contacting proteins on the other side and probably holding the rRNA structure together. The combined cluster of proteins S8, S12 and S17 appears to hold together the shoulder and platform of the 30S subunit. This is Small ribosomal subunit protein uS12 from Bacillus licheniformis (strain ATCC 14580 / DSM 13 / JCM 2505 / CCUG 7422 / NBRC 12200 / NCIMB 9375 / NCTC 10341 / NRRL NRS-1264 / Gibson 46).